We begin with the raw amino-acid sequence, 954 residues long: Glycine dehydrogenase (decarboxylating) (954 aa).

Over residues 1 to 13 (MTELLQSLSTQNE) the composition is skewed to polar residues. The tract at residues 1–24 (MTELLQSLSTQNEFVARHNGPNKS) is disordered. At lysine 704 the chain carries N6-(pyridoxal phosphate)lysine.

Belongs to the GcvP family. In terms of assembly, the glycine cleavage system is composed of four proteins: P, T, L and H. It depends on pyridoxal 5'-phosphate as a cofactor.

The catalysed reaction is N(6)-[(R)-lipoyl]-L-lysyl-[glycine-cleavage complex H protein] + glycine + H(+) = N(6)-[(R)-S(8)-aminomethyldihydrolipoyl]-L-lysyl-[glycine-cleavage complex H protein] + CO2. The glycine cleavage system catalyzes the degradation of glycine. The P protein binds the alpha-amino group of glycine through its pyridoxal phosphate cofactor; CO(2) is released and the remaining methylamine moiety is then transferred to the lipoamide cofactor of the H protein. This is Glycine dehydrogenase (decarboxylating) from Vibrio campbellii (strain ATCC BAA-1116).